The chain runs to 214 residues: Ceramide-1-phosphate transfer protein (214 aa).

The an N-acylsphingoid base 1-phosphate site is built by Asp56, Lys60, Arg106, Arg110, and His150.

Belongs to the GLTP family.

It is found in the cytoplasm. The protein localises to the cytosol. Its subcellular location is the golgi apparatus. It localises to the trans-Golgi network membrane. The protein resides in the cell membrane. It is found in the endosome membrane. The protein localises to the nucleus outer membrane. The catalysed reaction is N-(hexadecanoyl)-sphing-4-enine-1-phosphate(in) = N-(hexadecanoyl)-sphing-4-enine-1-phosphate(out). The enzyme catalyses N-(9Z-octadecenoyl)-sphing-4-enine-1-phosphate(in) = N-(9Z-octadecenoyl)-sphing-4-enine-1-phosphate(out). Functionally, mediates the intracellular transfer of ceramide-1-phosphate (C1P) between organelle membranes and the cell membrane. Required for normal structure of the Golgi stacks. Can bind phosphoceramides with a variety of aliphatic chains, but has a preference for lipids with saturated C16:0 or monounsaturated C18:1 aliphatic chains, and is inefficient with phosphoceramides containing lignoceryl (C24:0). Plays a role in the regulation of the cellular levels of ceramide-1-phosphate, and thereby contributes to the regulation of phospholipase PLA2G4A activity and the release of arachidonic acid. Has no activity with galactosylceramide, lactosylceramide, sphingomyelin, phosphatidylcholine, phosphatidic acid and ceramide. C1P transfer is stimulated by phosphatidylserine in C1P source vesicles. Regulates autophagy, inflammasome mediated IL1B and IL18 processing, and pyroptosis, but not apoptosis. The polypeptide is Ceramide-1-phosphate transfer protein (CPTP) (Bos taurus (Bovine)).